The sequence spans 155 residues: Protein-export protein SecB (155 aa).

This sequence belongs to the SecB family. In terms of assembly, homotetramer, a dimer of dimers. One homotetramer interacts with 1 SecA dimer.

It is found in the cytoplasm. One of the proteins required for the normal export of preproteins out of the cell cytoplasm. It is a molecular chaperone that binds to a subset of precursor proteins, maintaining them in a translocation-competent state. It also specifically binds to its receptor SecA. In Salmonella heidelberg (strain SL476), this protein is Protein-export protein SecB.